Here is a 150-residue protein sequence, read N- to C-terminus: Troponin C, isotype gamma (150 aa).

Met1 is modified (N-acetylmethionine). 4 EF-hand domains span residues 7 to 42 (EQLS…MGVK), 43 to 78 (ISEK…FLIE), 83 to 118 (ALKA…LDNR), and 119 to 150 (LTED…MMSG). 5 residues coordinate Ca(2+): Asp56, Asp58, Ser60, Glu62, and Glu67. Residues Asp132, Asp134, Ser136, Thr138, and Glu143 each coordinate Ca(2+).

This sequence belongs to the troponin C family.

In terms of biological role, troponin is the central regulatory protein of striated muscle contraction. Tn consists of three components: Tn-I which is the inhibitor of actomyosin ATPase, Tn-T which contains the binding site for tropomyosin and Tn-C. The binding of calcium to Tn-C abolishes the inhibitory action of Tn on actin filaments. This is Troponin C, isotype gamma from Astacus leptodactylus (Turkish narrow-clawed crayfish).